We begin with the raw amino-acid sequence, 411 residues long: Glutamate dehydrogenase 1 (411 aa).

The active site involves Lys-102.

The protein belongs to the Glu/Leu/Phe/Val dehydrogenases family.

It catalyses the reaction L-glutamate + NAD(+) + H2O = 2-oxoglutarate + NH4(+) + NADH + H(+). The enzyme catalyses L-glutamate + NADP(+) + H2O = 2-oxoglutarate + NH4(+) + NADPH + H(+). The polypeptide is Glutamate dehydrogenase 1 (GDH1) (Arabidopsis thaliana (Mouse-ear cress)).